A 278-amino-acid chain; its full sequence is Tumor necrosis factor ligand superfamily member 6 (278 aa).

Over 1 to 77 the chain is Cytoplasmic; the sequence is MQQPVNYPCP…SPLKKKDNIE (77 aa). The segment at 26-68 is disordered; it reads PGSVFSCPSSGPRGPGQRRPPPPPPPPSPLPPPSQPPPLPPLS. Low complexity predominate over residues 33-42; that stretch reads PSSGPRGPGQ. The segment covering 43–68 has biased composition (pro residues); it reads RRPPPPPPPPSPLPPPSQPPPLPPLS. The helical; Signal-anchor for type II membrane protein transmembrane segment at 78–99 threads the bilayer; that stretch reads LWLPVIFFMVLVALVGMGLGMY. Residues 100-278 are Extracellular-facing; it reads QLFHLQKELA…SKTFFGLYKL (179 aa). N-linked (GlcNAc...) asparagine glycosylation is present at N116. The segment covering 125-135 has biased composition (polar residues); that stretch reads EKQIANPSTPS. Positions 125–147 are disordered; sequence EKQIANPSTPSETKKPRSVAHLT. The region spanning 142–278 is the THD domain; it reads SVAHLTGNPR…SKTFFGLYKL (137 aa). C199 and C230 are disulfide-bonded. N-linked (GlcNAc...) asparagine glycans are attached at residues N247 and N257.

It belongs to the tumor necrosis factor family. In terms of assembly, homotrimer. Interacts with ARHGAP9, BAIAP2L1, BTK, CACNB3, CACNB4, CRK, DLG2, DNMBP, DOCK4, EPS8L3, FGR, FYB1, FYN, HCK, ITK, ITSN2, KALRN, LYN, MACC1, MIA, MPP4, MYO15A, NCF1, NCK1, NCK2, NCKIPSD, OSTF1, PIK3R1, PSTPIP1, RIMBP3C, SAMSN1, SH3GL3, SH3PXD2B, SH3PXD2A, SH3RF2, SKAP2, SNX33, SNX9, SORBS3, SPTA1, SRC, SRGAP1, SRGAP2, SRGAP3, TEC, TJP3 and YES1. In terms of processing, the soluble form derives from the membrane form by proteolytic processing. The membrane-bound form undergoes two successive intramembrane proteolytic cleavages. The first one is processed by ADAM10 producing an N-terminal fragment, which lacks the receptor-binding extracellular domain. This ADAM10-processed FasL (FasL APL) remnant form is still membrane anchored and further processed by SPPL2A that liberates the FasL intracellular domain (FasL ICD). FasL shedding by ADAM10 is a prerequisite for subsequent intramembrane cleavage by SPPL2A in T-cells. Post-translationally, phosphorylated by FGR on tyrosine residues; this is required for ubiquitination and subsequent internalization. N-glycosylated. In terms of processing, monoubiquitinated. Expressed in activated splenocytes and thymocytes. Moderate or weak expression found in small intestines, kidney and lung.

The protein localises to the cell membrane. Its subcellular location is the cytoplasmic vesicle lumen. The protein resides in the lysosome lumen. It is found in the secreted. It localises to the nucleus. Functionally, cytokine that binds to TNFRSF6/FAS, a receptor that transduces the apoptotic signal into cells. Involved in cytotoxic T-cell-mediated apoptosis, natural killer cell-mediated apoptosis and in T-cell development. Initiates fratricidal/suicidal activation-induced cell death (AICD) in antigen-activated T-cells contributing to the termination of immune responses. TNFRSF6/FAS-mediated apoptosis also has a role in the induction of peripheral tolerance. Binds to TNFRSF6B/DcR3, a decoy receptor that blocks apoptosis. Induces FAS-mediated activation of NF-kappa-B, initiating non-apoptotic signaling pathways. Can induce apoptosis but does not appear to be essential for this process. Its function is as follows. Cytoplasmic form induces gene transcription inhibition. The chain is Tumor necrosis factor ligand superfamily member 6 (Faslg) from Rattus norvegicus (Rat).